The sequence spans 255 residues: Ribonuclease HII (255 aa).

An RNase H type-2 domain is found at 72–255 (AIICGIDEVG…KSFEPIKSLL (184 aa)). A divalent metal cation-binding residues include aspartate 78, glutamate 79, and aspartate 170.

Belongs to the RNase HII family. It depends on Mn(2+) as a cofactor. Mg(2+) is required as a cofactor.

It is found in the cytoplasm. The catalysed reaction is Endonucleolytic cleavage to 5'-phosphomonoester.. Endonuclease that specifically degrades the RNA of RNA-DNA hybrids. The polypeptide is Ribonuclease HII (Staphylococcus aureus (strain MRSA252)).